The primary structure comprises 465 residues: Cysteine--tRNA ligase (465 aa).

Residue cysteine 27 coordinates Zn(2+). The 'HIGH' region signature appears at proline 29–asparagine 39. Zn(2+) is bound by residues cysteine 207, histidine 232, and glutamate 236. The 'KMSKS' region signature appears at lysine 264–serine 268. Lysine 267 serves as a coordination point for ATP.

Belongs to the class-I aminoacyl-tRNA synthetase family. In terms of assembly, monomer. Zn(2+) serves as cofactor.

It localises to the cytoplasm. It carries out the reaction tRNA(Cys) + L-cysteine + ATP = L-cysteinyl-tRNA(Cys) + AMP + diphosphate. This is Cysteine--tRNA ligase from Clostridioides difficile (strain 630) (Peptoclostridium difficile).